Consider the following 835-residue polypeptide: Toll-like receptor 4 (835 aa).

The first 25 residues, 1–25 (MMPLLHLAGTLIMALFLSCLRPGSL), serve as a signal peptide directing secretion. The Extracellular portion of the chain corresponds to 26–638 (NPCIEVLPNI…KTIISVSVVS (613 aa)). Residues Cys28 and Cys39 are joined by a disulfide bond. Asn34, Asn43, and Asn75 each carry an N-linked (GlcNAc...) asparagine glycan. LRR repeat units follow at residues 54–75 (STKNLDLSFNPLKILRSYSFTN), 78–99 (QLQWLDLSRCEIETIEDKAWHG), 102–123 (QLSTLVLTGNPIKSFSPGSFSG), 126–147 (NLENLVAVETKMTSLEGFHIGQ), and 150–171 (SLKKLNVAHNLIHSFKLPEYFS). The N-linked (GlcNAc...) asparagine glycan is linked to Asn172. LRR repeat units lie at residues 175-198 (NLEHVDLSYNYIQTISVKDLQFLR), 204-224 (NLSLDLSLNPIDSIQAQAFQG), and 226-247 (RLHELTLRSNFNSSNVLKMCLQ). Residues Asn204, Asn237, Asn248, Asn281, and Asn307 are each glycosylated (N-linked (GlcNAc...) asparagine). Cys280 and Cys304 form a disulfide bridge. One copy of the LRR 9 repeat lies at 372–381 (SLRYLDLSRN). Cys388 and Cys389 are oxidised to a cystine. 4 LRR repeats span residues 398-420 (NLKYLDLSFNGVILMSANFMGLE), 421-442 (ELEYLDFQHSTLKKVTEFSVFL), 446-467 (KLLYLDISYTNTKIDFDGIFLG), and 470-491 (SLNTLKMAGNSFKDNTLSNVFT). N-linked (GlcNAc...) asparagine glycans are attached at residues Asn492, Asn495, and Asn524. LRR repeat units follow at residues 495-516 (NLTFLDLSKCQLEQISRGVFDT), 519-540 (RLQLLNMSHNNLLFLDPSHYKQ), and 543-564 (SLRTLDCSFNRIETSKGILQHF). N-linked (GlcNAc...) asparagine glycosylation is found at Asn572 and Asn575. The LRRCT domain occupies 576–627 (NSVACICEYQNFLQWVKDQKMFLVNVEQMKCASPIDMKASLVLDFTNSTCYI). 2 cysteine pairs are disulfide-bonded: Cys580/Cys606 and Cys582/Cys625. N-linked (GlcNAc...) asparagine glycosylation occurs at Asn622. The helical transmembrane segment at 639–659 (VLVVATVAFLIYHFYFHLILI) threads the bilayer. The Cytoplasmic segment spans residues 660-835 (AGCKKYSRGE…EEEQEATTLT (176 aa)). Residues 670 to 813 (SIYDAFVIYS…IFWRRLKKAL (144 aa)) enclose the TIR domain.

The protein belongs to the Toll-like receptor family. Belongs to the lipopolysaccharide (LPS) receptor, a multi-protein complex containing at least CD14, LY96 and TLR4. Binding to bacterial LPS leads to homodimerization. Interacts with LY96 via the extracellular domain. Interacts with MYD88 and TIRAP via their respective TIR domains. Interacts with TICAM2. Interacts with NOX4. Interacts with CNPY3 and HSP90B1; this interaction is required for proper folding in the endoplasmic reticulum. Interacts with MAP3K21; this interaction leads to negative regulation of TLR4 signaling. Interacts with CD36, following CD36 stimulation by oxLDL or amyloid-beta 42, and forms a heterodimer with TLR6. The trimeric complex is internalized and triggers inflammatory response. LYN kinase activity facilitates TLR4-TLR6 heterodimerization and signal initiation. Interacts with TICAM1 in response to LPS in a WDFY1-dependent manner. Interacts with WDFY1 in response to LPS. Interacts with SMPDL3B. Interacts with CEACAM1; upon lipopolysaccharide stimulation, forms a complex including TLR4 and the phosphorylated form of SYK and CEACAM1, which in turn, recruits PTPN6 that dephosphorylates SYK, reducing the production of reactive oxygen species (ROS) and lysosome disruption, which in turn, reduces the activity of the inflammasome. Interacts with RFTN1; the interaction occurs in response to lipopolysaccharide stimulation. Interacts with SCIMP; the interaction occurs in response to lipopolysaccharide stimulation and is enhanced by phosphorylation of SCIMP by LYN. This interaction facilitates the phosphorylation of TLR4 by LYN which elicits a selective cytokine response in macrophages. Interacts with TRAF3IP3. Interacts with TREM1; this interaction enhances TLR4-mediated inflammatory response. Interacts with ZG16B/PAUF. Interacts with CD82; this interaction inhibits TLR4-mediated signaling pathway. In terms of processing, phosphorylated on tyrosine residues by LYN after binding lipopolysaccharide. Post-translationally, ubiquitinated by RNF128 via 'Lys-28'-linked polyubiquitin chains, leading to proteasomal degradation.

It localises to the cell membrane. The protein resides in the early endosome. It is found in the cell projection. The protein localises to the ruffle. In terms of biological role, transmembrane receptor that functions as a pattern recognition receptor recognizing pathogen- and damage-associated molecular patterns (PAMPs and DAMPs) to induce innate immune responses via downstream signaling pathways. At the plasma membrane, cooperates with LY96 to mediate the innate immune response to bacterial lipopolysaccharide (LPS). Also involved in LPS-independent inflammatory responses triggered by free fatty acids, such as palmitate, and Ni(2+). Mechanistically, acts via MYD88, TIRAP and TRAF6, leading to NF-kappa-B activation, cytokine secretion and the inflammatory response. Alternatively, CD14-mediated TLR4 internalization via endocytosis is associated with the initiation of a MYD88-independent signaling via the TICAM1-TBK1-IRF3 axis leading to type I interferon production. In addition to the secretion of proinflammatory cytokines, initiates the activation of NLRP3 inflammasome and formation of a positive feedback loop between autophagy and NF-kappa-B signaling cascade. In complex with TLR6, promotes inflammation in monocytes/macrophages by associating with TLR6 and the receptor CD86. Upon ligand binding, such as oxLDL or amyloid-beta 42, the TLR4:TLR6 complex is internalized and triggers inflammatory response, leading to NF-kappa-B-dependent production of CXCL1, CXCL2 and CCL9 cytokines, via MYD88 signaling pathway, and CCL5 cytokine, via TICAM1 signaling pathway. In myeloid dendritic cells, vesicular stomatitis virus glycoprotein G but not LPS promotes the activation of IRF7, leading to type I IFN production in a CD14-dependent manner. The polypeptide is Toll-like receptor 4 (Tlr4) (Rattus norvegicus (Rat)).